The sequence spans 418 residues: NADH-quinone oxidoreductase subunit D (418 aa).

It belongs to the complex I 49 kDa subunit family. NDH-1 is composed of 14 different subunits. Subunits NuoB, C, D, E, F, and G constitute the peripheral sector of the complex.

The protein resides in the cell inner membrane. It carries out the reaction a quinone + NADH + 5 H(+)(in) = a quinol + NAD(+) + 4 H(+)(out). In terms of biological role, NDH-1 shuttles electrons from NADH, via FMN and iron-sulfur (Fe-S) centers, to quinones in the respiratory chain. The immediate electron acceptor for the enzyme in this species is believed to be ubiquinone. Couples the redox reaction to proton translocation (for every two electrons transferred, four hydrogen ions are translocated across the cytoplasmic membrane), and thus conserves the redox energy in a proton gradient. The polypeptide is NADH-quinone oxidoreductase subunit D (Methylacidiphilum infernorum (isolate V4) (Methylokorus infernorum (strain V4))).